Here is a 192-residue protein sequence, read N- to C-terminus: 7-methyl-GTP pyrophosphatase (192 aa).

The active-site Proton acceptor is D69.

Belongs to the Maf family. YceF subfamily. A divalent metal cation is required as a cofactor.

It localises to the cytoplasm. It catalyses the reaction N(7)-methyl-GTP + H2O = N(7)-methyl-GMP + diphosphate + H(+). Nucleoside triphosphate pyrophosphatase that hydrolyzes 7-methyl-GTP (m(7)GTP). May have a dual role in cell division arrest and in preventing the incorporation of modified nucleotides into cellular nucleic acids. The chain is 7-methyl-GTP pyrophosphatase from Pseudomonas syringae pv. syringae (strain B728a).